We begin with the raw amino-acid sequence, 163 residues long: UPF0303 protein SAV_5210 (163 aa).

It belongs to the UPF0303 family.

The chain is UPF0303 protein SAV_5210 from Streptomyces avermitilis (strain ATCC 31267 / DSM 46492 / JCM 5070 / NBRC 14893 / NCIMB 12804 / NRRL 8165 / MA-4680).